The following is a 436-amino-acid chain: GTPase Der (436 aa).

2 EngA-type G domains span residues 3-167 (NIVA…PIKP) and 177-352 (PRFA…ENRQ). Residues 9 to 16 (GRPNVGKS), 56 to 60 (DTGGY), 119 to 122 (NKVD), 183 to 190 (GRPNAGKS), 230 to 234 (DTAGI), and 295 to 298 (NKWD) each bind GTP. The KH-like domain maps to 353-436 (QRISTSKFNE…VPIDIYIREK (84 aa)).

Belongs to the TRAFAC class TrmE-Era-EngA-EngB-Septin-like GTPase superfamily. EngA (Der) GTPase family. Associates with the 50S ribosomal subunit.

Its function is as follows. GTPase that plays an essential role in the late steps of ribosome biogenesis. This is GTPase Der from Flavobacterium psychrophilum (strain ATCC 49511 / DSM 21280 / CIP 103535 / JIP02/86).